Reading from the N-terminus, the 461-residue chain is D-phenylhydantoinase (461 aa).

A divalent metal cation contacts are provided by His-59, His-61, and Lys-151. At Lys-151 the chain carries N6-carboxylysine. Tyr-156 serves as a coordination point for substrate. Residues His-182 and His-239 each coordinate a divalent metal cation. Ser-286 contacts substrate. A divalent metal cation is bound at residue Asp-313. A substrate-binding site is contributed by Asn-335.

It belongs to the metallo-dependent hydrolases superfamily. Hydantoinase/dihydropyrimidinase family. Homotetramer. A divalent metal cation serves as cofactor. Post-translationally, carboxylation allows a single lysine to coordinate two divalent metal cations.

The catalysed reaction is D-5-phenylhydantoin + H2O = N-carbamoyl-D-phenylglycine + H(+). Catalyzes the stereospecific hydrolysis of the cyclic amide bond of D-hydantoin derivatives with an aromatic side chains at the 5'-position. Has no activity on dihydropyrimidines. The physiological function is unknown. This Escherichia coli (strain UTI89 / UPEC) protein is D-phenylhydantoinase.